Consider the following 133-residue polypeptide: uncharacterized protein (133 aa).

This is an uncharacterized protein from Caenorhabditis elegans.